Consider the following 789-residue polypeptide: Polyribonucleotide nucleotidyltransferase (789 aa).

Residues aspartate 494 and aspartate 500 each contribute to the Mg(2+) site. In terms of domain architecture, KH spans proline 561–isoleucine 620. Positions glycine 630–arginine 697 constitute an S1 motif domain. The segment at glycine 709–phenylalanine 789 is disordered. The segment covering serine 737–arginine 749 has biased composition (basic residues). The segment covering asparagine 763–asparagine 780 has biased composition (low complexity).

Belongs to the polyribonucleotide nucleotidyltransferase family. The cofactor is Mg(2+).

Its subcellular location is the cytoplasm. It catalyses the reaction RNA(n+1) + phosphate = RNA(n) + a ribonucleoside 5'-diphosphate. In terms of biological role, involved in mRNA degradation. Catalyzes the phosphorolysis of single-stranded polyribonucleotides processively in the 3'- to 5'-direction. This chain is Polyribonucleotide nucleotidyltransferase, found in Ehrlichia ruminantium (strain Gardel).